The following is a 147-amino-acid chain: Transcription elongation factor Spt5 (147 aa).

The KOW domain occupies K91–E122.

This sequence belongs to the archaeal Spt5 family. As to quaternary structure, heterodimer composed of Spt4 and Spt5. Interacts with RNA polymerase (RNAP). Forms a homodimer in solution.

Stimulates transcription elongation. This chain is Transcription elongation factor Spt5, found in Methanocaldococcus jannaschii (strain ATCC 43067 / DSM 2661 / JAL-1 / JCM 10045 / NBRC 100440) (Methanococcus jannaschii).